The following is a 343-amino-acid chain: Holliday junction branch migration complex subunit RuvB (343 aa).

The disordered stretch occupies residues 1–23 (MSDDFEVVRPEEQAGDEKDRDLR). Residues 1–183 (MSDDFEVVRP…FGIVQRFEFY (183 aa)) are large ATPase domain (RuvB-L). Residues Leu22, Arg23, Gly64, Lys67, Thr68, Thr69, 130–132 (EDY), Arg173, Tyr183, and Arg220 each bind ATP. Thr68 contacts Mg(2+). The small ATPAse domain (RuvB-S) stretch occupies residues 184–254 (SHEELASIIS…TVAAGLKQLN (71 aa)). The segment at 257-343 (GLGLETYDRQ…LGDGQEGLFD (87 aa)) is head domain (RuvB-H). DNA contacts are provided by Arg312 and Arg317.

Belongs to the RuvB family. In terms of assembly, homohexamer. Forms an RuvA(8)-RuvB(12)-Holliday junction (HJ) complex. HJ DNA is sandwiched between 2 RuvA tetramers; dsDNA enters through RuvA and exits via RuvB. An RuvB hexamer assembles on each DNA strand where it exits the tetramer. Each RuvB hexamer is contacted by two RuvA subunits (via domain III) on 2 adjacent RuvB subunits; this complex drives branch migration. In the full resolvosome a probable DNA-RuvA(4)-RuvB(12)-RuvC(2) complex forms which resolves the HJ.

Its subcellular location is the cytoplasm. It catalyses the reaction ATP + H2O = ADP + phosphate + H(+). The RuvA-RuvB-RuvC complex processes Holliday junction (HJ) DNA during genetic recombination and DNA repair, while the RuvA-RuvB complex plays an important role in the rescue of blocked DNA replication forks via replication fork reversal (RFR). RuvA specifically binds to HJ cruciform DNA, conferring on it an open structure. The RuvB hexamer acts as an ATP-dependent pump, pulling dsDNA into and through the RuvAB complex. RuvB forms 2 homohexamers on either side of HJ DNA bound by 1 or 2 RuvA tetramers; 4 subunits per hexamer contact DNA at a time. Coordinated motions by a converter formed by DNA-disengaged RuvB subunits stimulates ATP hydrolysis and nucleotide exchange. Immobilization of the converter enables RuvB to convert the ATP-contained energy into a lever motion, pulling 2 nucleotides of DNA out of the RuvA tetramer per ATP hydrolyzed, thus driving DNA branch migration. The RuvB motors rotate together with the DNA substrate, which together with the progressing nucleotide cycle form the mechanistic basis for DNA recombination by continuous HJ branch migration. Branch migration allows RuvC to scan DNA until it finds its consensus sequence, where it cleaves and resolves cruciform DNA. The protein is Holliday junction branch migration complex subunit RuvB of Treponema denticola (strain ATCC 35405 / DSM 14222 / CIP 103919 / JCM 8153 / KCTC 15104).